The sequence spans 180 residues: Signal peptidase complex subunit 2 (180 aa).

At 1–45 (MTDEPVKVVNKWDGPTVKNALDEVVKKILNDKVGWTESHNLMNLR) the chain is on the cytoplasmic side. A helical transmembrane segment spans residues 46–66 (LLISFIGVAFSAFACGYDYYE). Residues 67–72 (PFPKSK) are Lumenal-facing. The chain crosses the membrane as a helical span at residues 73–93 (IVLAVCSVSYFICMGILQMYQ). Residues 94–180 (WYVEKDCIYE…LYNRLIRSEQ (87 aa)) are Cytoplasmic-facing.

Belongs to the SPCS2 family. Component of the signal peptidase complex (SPC) composed of a catalytic subunit sec-11 and three accessory subunits spcs-1, spcs-2 and spcs-3. The complex induces a local thinning of the ER membrane which is used to measure the length of the signal peptide (SP) h-region of protein substrates. This ensures the selectivity of the complex towards h-regions shorter than 18-20 amino acids.

The protein resides in the endoplasmic reticulum membrane. Functionally, component of the signal peptidase complex (SPC) which catalyzes the cleavage of N-terminal signal sequences from nascent proteins as they are translocated into the lumen of the endoplasmic reticulum. Enhances the enzymatic activity of SPC and facilitates the interactions between different components of the translocation site. The protein is Signal peptidase complex subunit 2 of Caenorhabditis elegans.